Reading from the N-terminus, the 140-residue chain is MAAITFHLDVVSAEKKLFSGRAESVQVSGSEGELGIHAGHTPLLTAITPGMVRIIKQHGEEEIIYLSGGMLEVQPSTVTVLTDTAIRGEDLDAAKAAEAKRQAEEQIRNQHGDIDFAQAASDLAKAIAQLRVIELTKKSR.

Belongs to the ATPase epsilon chain family. As to quaternary structure, F-type ATPases have 2 components, CF(1) - the catalytic core - and CF(0) - the membrane proton channel. CF(1) has five subunits: alpha(3), beta(3), gamma(1), delta(1), epsilon(1). CF(0) has three main subunits: a, b and c.

The protein localises to the cell inner membrane. Produces ATP from ADP in the presence of a proton gradient across the membrane. The chain is ATP synthase epsilon chain 1 from Photobacterium profundum (strain SS9).